A 406-amino-acid chain; its full sequence is Tryptophan synthase beta chain (406 aa).

K99 is modified (N6-(pyridoxal phosphate)lysine).

This sequence belongs to the TrpB family. Tetramer of two alpha and two beta chains. It depends on pyridoxal 5'-phosphate as a cofactor.

The enzyme catalyses (1S,2R)-1-C-(indol-3-yl)glycerol 3-phosphate + L-serine = D-glyceraldehyde 3-phosphate + L-tryptophan + H2O. It participates in amino-acid biosynthesis; L-tryptophan biosynthesis; L-tryptophan from chorismate: step 5/5. The beta subunit is responsible for the synthesis of L-tryptophan from indole and L-serine. This chain is Tryptophan synthase beta chain, found in Allorhizobium ampelinum (strain ATCC BAA-846 / DSM 112012 / S4) (Agrobacterium vitis (strain S4)).